Consider the following 310-residue polypeptide: Ribonuclease Z (310 aa).

Residues histidine 60, histidine 62, aspartate 64, histidine 65, histidine 140, aspartate 209, and histidine 269 each contribute to the Zn(2+) site. Aspartate 64 functions as the Proton acceptor in the catalytic mechanism.

This sequence belongs to the RNase Z family. Homodimer. Zn(2+) is required as a cofactor.

It catalyses the reaction Endonucleolytic cleavage of RNA, removing extra 3' nucleotides from tRNA precursor, generating 3' termini of tRNAs. A 3'-hydroxy group is left at the tRNA terminus and a 5'-phosphoryl group is left at the trailer molecule.. Zinc phosphodiesterase, which displays some tRNA 3'-processing endonuclease activity. Probably involved in tRNA maturation, by removing a 3'-trailer from precursor tRNA. The polypeptide is Ribonuclease Z (Methanococcus maripaludis (strain C7 / ATCC BAA-1331)).